Consider the following 256-residue polypeptide: MRYALGVEYDGSDFRGWQNLGEGGPSVQASLEQALSSVADTPLQVVCAGRTDAGVHGQCQVVHFDTDVVRDPRAWMLGTTTRLPRSIAVRWCVPVADDFHARFSARARRYRYRLLNREVRPALDRQTLSWERRALDETLMHAAGQALIGENDFSAFRSVQCQALHARRELQSLQVSRQGEVIEVAVQGNAFLHHMVRNIVGSLILVGSGEKPVEWIAELLAGRDRTVAGPTAPPQGLVFLGPLYPDNWHLPAEVTL.

Catalysis depends on Asp52, which acts as the Nucleophile. Tyr110 is a substrate binding site.

It belongs to the tRNA pseudouridine synthase TruA family. Homodimer.

It catalyses the reaction uridine(38/39/40) in tRNA = pseudouridine(38/39/40) in tRNA. Functionally, formation of pseudouridine at positions 38, 39 and 40 in the anticodon stem and loop of transfer RNAs. This is tRNA pseudouridine synthase A from Stenotrophomonas maltophilia (strain K279a).